The primary structure comprises 483 residues: S-adenosylhomocysteine hydrolase-like protein 1 (483 aa).

The disordered stretch occupies residues 1-56; that stretch reads MQEFTKFPTKTGRRSLSRSISQSSTDSYSSAASYTDSSDDEVSPREKQQTNSKGSS. Low complexity predominate over residues 17–36; it reads SRSISQSSTDSYSSAASYTD. The PEST stretch occupies residues 18 to 45; the sequence is RSISQSSTDSYSSAASYTDSSDDEVSPR. S21 carries the phosphoserine; by PKD modification. Residues S24, S27, S30, and S37 each carry the phosphoserine modification. Residues 91–154 are interaction with BCL2L10; the sequence is QGEKPLAGAK…EAGVAVFAWK (64 aa). Substrate-binding residues include T108, D182, E207, K237, and D241. The NAD binding stretch occupies residues 234 to 401; the sequence is SVTKQKFDNL…EGRLLNLSCS (168 aa). NAD(+) is bound by residues 271 to 275, E294, and N329; that span reads GYGEV. At S344 the chain carries Phosphoserine. Residue 350–352 coordinates NAD(+); that stretch reads MGH. Residues 473–483 form a PDZ-binding region; it reads NGPFKPNYYRY.

The protein belongs to the adenosylhomocysteinase family. In terms of assembly, forms multimers. Forms heteromultimers with AHCYL2 (via the C-terminal region). Interacts (when phosphorylated) with ITPR1 (when not phosphorylated); the interaction suppresses inositol 1,4,5-trisphosphate binding to ITPR1. Interacts with BCL2L10; this strengthens the interaction of AHCYL1 with ITPR1. Interacts with CFTR and SLC26A6; the interactions take place once AHCYL1 is released from ITPR1 and increase CFTR and SLC26A6 activities. Interacts with RRM1; in a phosphorylation- and (dATP)-dependent manner. Interacts (via PEST domain when phosphorylated) with SLC4A4 isoform 1 but not isoform 2; the interaction increases SLC4A4 isoform 1 activity. Interacts (when phosphorylated) with SLC9A3; the interaction is required for SLC9A3 apical location and activity. Interacts (when phosphorylated) with FIP1L1; the interaction is direct and associates AHCYL1 with the CPSF complex and RNA. Interacts with PAPOLA. Interacts with ZCCHC4. Interacts with AHCY. NAD(+) is required as a cofactor. Post-translationally, phosphorylated at Ser/Thr residues between Ser-21 and Thr-25 in the PEST region: required for interaction with dATP-bound RRM1 and ITPR1. Phosphorylation at Ser-21 by PRKD1 and CAMK4 is required for further phosphorylations by CSNK1A1. Phosphorylation is induced by oxidative stress. Probably phosphorylated by CAMK2A; phosphorylation at Ser-21 may be required for interaction with SLC9A3. Dephosphorylated in response to apoptotic stress conditions which causes translocation of both AHCYL1 and BCL2L10 from mitochondria-associated endoplasmic reticulum membranes and promotes apoptosis. In terms of tissue distribution, expressed in kidney proximal tubules and outer medulla (at protein level).

The protein localises to the endoplasmic reticulum. The protein resides in the cytoplasm. It is found in the cytosol. It localises to the apical cell membrane. Its subcellular location is the microsome. Its function is as follows. Multifaceted cellular regulator which coordinates several essential cellular functions including regulation of epithelial HCO3(-) and fluid secretion, mRNA processing and DNA replication. Regulates ITPR1 sensitivity to inositol 1,4,5-trisphosphate, competing for the common binding site and acting as endogenous 'pseudoligand' whose inhibitory activity can be modulated by its phosphorylation status. Promotes the formation of contact points between the endoplasmic reticulum (ER) and mitochondria, facilitating transfer of Ca(2+) from the ER to mitochondria. Under normal cellular conditions, functions cooperatively with BCL2L10 to limit ITPR1-mediated Ca(2+) release but, under apoptotic stress conditions, dephosphorylated which promotes dissociation of both AHCYL1 and BCL2L10 from mitochondria-associated endoplasmic reticulum membranes, inhibits BCL2L10 interaction with ITPR1 and leads to increased Ca(2+) transfer to mitochondria which promotes apoptosis. In the pancreatic and salivary ducts, at resting state, attenuates inositol 1,4,5-trisphosphate-induced calcium release by interacting with ITPR1. When extracellular stimuli induce ITPR1 phosphorylation or inositol 1,4,5-trisphosphate production, dissociates from ITPR1 to interact with CFTR and SLC26A6, mediating their synergistic activation by calcium and cAMP that stimulates the epithelial secretion of electrolytes and fluid. Also activates basolateral SLC4A4 isoform 1 to coordinate fluid and HCO3(-) secretion. Inhibits the effect of STK39 on SLC4A4 and CFTR by recruiting PP1 phosphatase which activates SLC4A4, SLC26A6 and CFTR through dephosphorylation. Mediates the induction of SLC9A3 surface expression produced by Angiotensin-2. Depending on the cell type, activates SLC9A3 in response to calcium or reverses SLC9A3R2-dependent calcium inhibition. May modulate the polyadenylation state of specific mRNAs, both by controlling the subcellular location of FIP1L1 and by inhibiting PAPOLA activity, in response to a stimulus that alters its phosphorylation state. Acts as a (dATP)-dependent inhibitor of ribonucleotide reductase large subunit RRM1, controlling the endogenous dNTP pool and ensuring normal cell cycle progression. In vitro does not exhibit any S-adenosyl-L-homocysteine hydrolase activity. This Rattus norvegicus (Rat) protein is S-adenosylhomocysteine hydrolase-like protein 1.